The chain runs to 174 residues: MSFQVVTGWLDNSPRRIFAFVSLASIGMLAFGQYLQHVVGLEPCPMCIVQRYALVLVAIIAGLTGASGRKGLHLGGAVLMLGSSGFGAYVAARQSWLQWYPPEVVSCGRDFYGMIETFPLQRAIPMIFKGSGDCSKVDWTFLGGSIANWTFVVFGLIVLLSLALIWRRVSRRVS.

Residues 1–17 (MSFQVVTGWLDNSPRRI) lie on the Cytoplasmic side of the membrane. The helical transmembrane segment at 18–34 (FAFVSLASIGMLAFGQY) threads the bilayer. Topologically, residues 35 to 52 (LQHVVGLEPCPMCIVQRY) are periplasmic. The cysteines at positions 44 and 47 are disulfide-linked. The chain crosses the membrane as a helical span at residues 53-67 (ALVLVAIIAGLTGAS). At 68–74 (GRKGLHL) the chain is on the cytoplasmic side. A helical membrane pass occupies residues 75–92 (GGAVLMLGSSGFGAYVAA). Residues 93-148 (RQSWLQWYPPEVVSCGRDFYGMIETFPLQRAIPMIFKGSGDCSKVDWTFLGGSIAN) lie on the Periplasmic side of the membrane. An intrachain disulfide couples Cys107 to Cys134. Residues 149–167 (WTFVVFGLIVLLSLALIWR) traverse the membrane as a helical segment. Residues 168-174 (RVSRRVS) lie on the Cytoplasmic side of the membrane.

Belongs to the DsbB family.

It localises to the cell inner membrane. Its function is as follows. Required for disulfide bond formation in some periplasmic proteins. Acts by oxidizing the DsbA protein. The protein is Disulfide bond formation protein B of Albidiferax ferrireducens (strain ATCC BAA-621 / DSM 15236 / T118) (Rhodoferax ferrireducens).